Here is a 145-residue protein sequence, read N- to C-terminus: D-aminoacyl-tRNA deacylase (145 aa).

The Gly-cisPro motif, important for rejection of L-amino acids motif lies at 137–138; sequence GP.

Belongs to the DTD family. Homodimer.

The protein resides in the cytoplasm. The enzyme catalyses glycyl-tRNA(Ala) + H2O = tRNA(Ala) + glycine + H(+). It catalyses the reaction a D-aminoacyl-tRNA + H2O = a tRNA + a D-alpha-amino acid + H(+). An aminoacyl-tRNA editing enzyme that deacylates mischarged D-aminoacyl-tRNAs. Also deacylates mischarged glycyl-tRNA(Ala), protecting cells against glycine mischarging by AlaRS. Acts via tRNA-based rather than protein-based catalysis; rejects L-amino acids rather than detecting D-amino acids in the active site. By recycling D-aminoacyl-tRNA to D-amino acids and free tRNA molecules, this enzyme counteracts the toxicity associated with the formation of D-aminoacyl-tRNA entities in vivo and helps enforce protein L-homochirality. This is D-aminoacyl-tRNA deacylase from Proteus mirabilis (strain HI4320).